A 122-amino-acid chain; its full sequence is Small ribosomal subunit protein uS13 (122 aa).

A disordered region spans residues 97 to 122; that stretch reads PVRGQRTHTNARTRKGPAKAIAGKKK.

This sequence belongs to the universal ribosomal protein uS13 family. Part of the 30S ribosomal subunit. Forms a loose heterodimer with protein S19. Forms two bridges to the 50S subunit in the 70S ribosome.

Located at the top of the head of the 30S subunit, it contacts several helices of the 16S rRNA. In the 70S ribosome it contacts the 23S rRNA (bridge B1a) and protein L5 of the 50S subunit (bridge B1b), connecting the 2 subunits; these bridges are implicated in subunit movement. Contacts the tRNAs in the A and P-sites. The sequence is that of Small ribosomal subunit protein uS13 from Rhizobium rhizogenes (strain K84 / ATCC BAA-868) (Agrobacterium radiobacter).